Here is a 433-residue protein sequence, read N- to C-terminus: Cyclin-dependent kinase F-3 (433 aa).

In terms of domain architecture, Protein kinase spans 4–283; that stretch reads YKVIREIGDG…AEQSLQHPFF (280 aa). ATP contacts are provided by residues 10-18 and lysine 33; that span reads IGDGTCGNV. The active-site Proton acceptor is aspartate 125. Position 151 is a phosphoserine (serine 151). Phosphothreonine is present on threonine 156.

It belongs to the protein kinase superfamily. CMGC Ser/Thr protein kinase family. CDC2/CDKX subfamily.

It carries out the reaction L-seryl-[protein] + ATP = O-phospho-L-seryl-[protein] + ADP + H(+). It catalyses the reaction L-threonyl-[protein] + ATP = O-phospho-L-threonyl-[protein] + ADP + H(+). The enzyme catalyses [DNA-directed RNA polymerase] + ATP = phospho-[DNA-directed RNA polymerase] + ADP + H(+). This chain is Cyclin-dependent kinase F-3 (CDKF-3), found in Oryza sativa subsp. japonica (Rice).